Reading from the N-terminus, the 476-residue chain is MDYLPIFADLKQRPVLVVGGGEVAARKVDLLLRAGAEIRIVAQSLSPILEQLSQQGQIHWLGQAFAAEQLDEVFLVIAATDDSALNAEVFSEADKRRVLANVVDDQPRCSFIFPSIIDRSPLVVAVSSSGQAPVLARMLREKLEALLPASLGQMAEVAGRWRGQVKQRLNAIGERRRFWEKTFGGRFATLVANGQTAEAQRQLEQDLEQFAQGSEGTQGEIALVGAGPGDVGLLTLRGLQVMQQADVVLYDHLVSDEILDLVRRDAERICVGKRAGAHSVIQEETNRLLVELAQQGKRVVRLKGGDPFIFGRGGEELQVAAAAGIPFQVVPGVTAAAGATAYAGIPLTHRDHAQSVTFITGHCRPDGDGLDWADLARARQTLAIYMGTMKAADISQRLIAHGRAATTPVAVISRGTRADQLVQTGTLQQLEQLAQQAPLPALLVIGEVVELHHQIAWFGHQPQAEGVSRPAVVNLA.

A precorrin-2 dehydrogenase /sirohydrochlorin ferrochelatase region spans residues 1 to 203; that stretch reads MDYLPIFADL…GQTAEAQRQL (203 aa). NAD(+)-binding positions include 22-23 and 43-44; these read EV and QS. Phosphoserine is present on Ser128. The uroporphyrinogen-III C-methyltransferase stretch occupies residues 219-476; it reads GEIALVGAGP…VSRPAVVNLA (258 aa). Position 228 (Pro228) interacts with S-adenosyl-L-methionine. Asp251 functions as the Proton acceptor in the catalytic mechanism. Lys273 serves as the catalytic Proton donor. Residues 304–306, Ile309, 334–335, Met386, and Gly415 contribute to the S-adenosyl-L-methionine site; these read GGD and TA.

It in the N-terminal section; belongs to the precorrin-2 dehydrogenase / sirohydrochlorin ferrochelatase family. In the C-terminal section; belongs to the precorrin methyltransferase family.

It catalyses the reaction uroporphyrinogen III + 2 S-adenosyl-L-methionine = precorrin-2 + 2 S-adenosyl-L-homocysteine + H(+). It carries out the reaction precorrin-2 + NAD(+) = sirohydrochlorin + NADH + 2 H(+). The enzyme catalyses siroheme + 2 H(+) = sirohydrochlorin + Fe(2+). It participates in cofactor biosynthesis; adenosylcobalamin biosynthesis; precorrin-2 from uroporphyrinogen III: step 1/1. The protein operates within cofactor biosynthesis; adenosylcobalamin biosynthesis; sirohydrochlorin from precorrin-2: step 1/1. Its pathway is porphyrin-containing compound metabolism; siroheme biosynthesis; precorrin-2 from uroporphyrinogen III: step 1/1. It functions in the pathway porphyrin-containing compound metabolism; siroheme biosynthesis; siroheme from sirohydrochlorin: step 1/1. It participates in porphyrin-containing compound metabolism; siroheme biosynthesis; sirohydrochlorin from precorrin-2: step 1/1. Multifunctional enzyme that catalyzes the SAM-dependent methylations of uroporphyrinogen III at position C-2 and C-7 to form precorrin-2 via precorrin-1. Then it catalyzes the NAD-dependent ring dehydrogenation of precorrin-2 to yield sirohydrochlorin. Finally, it catalyzes the ferrochelation of sirohydrochlorin to yield siroheme. This chain is Siroheme synthase 1, found in Serratia proteamaculans (strain 568).